We begin with the raw amino-acid sequence, 237 residues long: Phosphoribosylaminoimidazole-succinocarboxamide synthase (237 aa).

Belongs to the SAICAR synthetase family.

The enzyme catalyses 5-amino-1-(5-phospho-D-ribosyl)imidazole-4-carboxylate + L-aspartate + ATP = (2S)-2-[5-amino-1-(5-phospho-beta-D-ribosyl)imidazole-4-carboxamido]succinate + ADP + phosphate + 2 H(+). Its pathway is purine metabolism; IMP biosynthesis via de novo pathway; 5-amino-1-(5-phospho-D-ribosyl)imidazole-4-carboxamide from 5-amino-1-(5-phospho-D-ribosyl)imidazole-4-carboxylate: step 1/2. The polypeptide is Phosphoribosylaminoimidazole-succinocarboxamide synthase (Enterococcus faecalis (strain ATCC 700802 / V583)).